Reading from the N-terminus, the 1017-residue chain is Probable beta-galactosidase B (1017 aa).

The N-terminal stretch at 1 to 20 (MTRITKLCVLLLSSIGLLAA) is a signal peptide. Asn23 carries an N-linked (GlcNAc...) asparagine glycan. Residue Tyr90 participates in substrate binding. Asn100 carries an N-linked (GlcNAc...) asparagine glycan. Asn135, Ala136, and Glu137 together coordinate substrate. Asn158 carries N-linked (GlcNAc...) asparagine glycosylation. Asn195 is a binding site for substrate. The active-site Proton donor is the Glu196. Residue Asn211 is glycosylated (N-linked (GlcNAc...) asparagine). Tyr265 contacts substrate. Cys271 and Cys324 are disulfide-bonded. Glu308 serves as the catalytic Nucleophile. Residue Tyr373 participates in substrate binding. N-linked (GlcNAc...) asparagine glycans are attached at residues Asn411, Asn417, Asn456, Asn628, Asn681, Asn737, Asn770, Asn777, Asn785, Asn828, and Asn829.

Belongs to the glycosyl hydrolase 35 family.

Its subcellular location is the secreted. The catalysed reaction is Hydrolysis of terminal non-reducing beta-D-galactose residues in beta-D-galactosides.. Functionally, cleaves beta-linked terminal galactosyl residues from gangliosides, glycoproteins, and glycosaminoglycans. In Aspergillus niger (strain ATCC MYA-4892 / CBS 513.88 / FGSC A1513), this protein is Probable beta-galactosidase B (lacB).